We begin with the raw amino-acid sequence, 192 residues long: Thymidine kinase (192 aa).

Residues 9–16 and 87–90 each bind ATP; these read SAMNAGKS and DECQ. Glu-88 (proton acceptor) is an active-site residue. Zn(2+) is bound by residues Cys-145, Cys-147, Cys-182, and His-185.

Belongs to the thymidine kinase family. Homotetramer.

Its subcellular location is the cytoplasm. It catalyses the reaction thymidine + ATP = dTMP + ADP + H(+). This chain is Thymidine kinase, found in Vibrio vulnificus (strain CMCP6).